The following is a 254-amino-acid chain: MFVDLNSDLGESFGSWKMGNDDQILPVVTSANIACGFHAGDPLGILKTVRKAVELGVTIGAHVSYPDLVGFGRRNMDLSRDELIADVLYQISALDGLAKVAGSKVQYVKPHGALYNTIAYDQVQAAAVIDAIKMYNPELVLVALAGSNLVEQARAAGLKVVSEAFADRAYNSDGSLVSRRLEGAVLHDSAFVASRVVSMLKNGGVESIDGVFTPIQADTICLHGDTDGALEMSAAIKAELVKNNIEIRPFVNKA.

This sequence belongs to the LamB/PxpA family. As to quaternary structure, forms a complex composed of PxpA, PxpB and PxpC.

The enzyme catalyses 5-oxo-L-proline + ATP + 2 H2O = L-glutamate + ADP + phosphate + H(+). Functionally, catalyzes the cleavage of 5-oxoproline to form L-glutamate coupled to the hydrolysis of ATP to ADP and inorganic phosphate. The sequence is that of 5-oxoprolinase subunit A from Acinetobacter baumannii (strain AB307-0294).